A 263-amino-acid polypeptide reads, in one-letter code: Acyl-[acyl-carrier-protein]--UDP-N-acetylglucosamine O-acyltransferase (263 aa).

Belongs to the transferase hexapeptide repeat family. LpxA subfamily. Homotrimer.

It is found in the cytoplasm. It carries out the reaction a (3R)-hydroxyacyl-[ACP] + UDP-N-acetyl-alpha-D-glucosamine = a UDP-3-O-[(3R)-3-hydroxyacyl]-N-acetyl-alpha-D-glucosamine + holo-[ACP]. Its pathway is glycolipid biosynthesis; lipid IV(A) biosynthesis; lipid IV(A) from (3R)-3-hydroxytetradecanoyl-[acyl-carrier-protein] and UDP-N-acetyl-alpha-D-glucosamine: step 1/6. Functionally, involved in the biosynthesis of lipid A, a phosphorylated glycolipid that anchors the lipopolysaccharide to the outer membrane of the cell. This Xylella fastidiosa (strain Temecula1 / ATCC 700964) protein is Acyl-[acyl-carrier-protein]--UDP-N-acetylglucosamine O-acyltransferase.